A 515-amino-acid chain; its full sequence is Fatty acyl-CoA reductase 2 (515 aa).

Residues 1–464 (MSMIAAFYSN…KAKQHLRRLR (464 aa)) lie on the Cytoplasmic side of the membrane. A helical transmembrane segment spans residues 465-484 (NIHYLFNTALFLIIWRLLIA). At 485–515 (RSQMARNVWFFIVSFCYKFISYFRASSTLKV) the chain is on the peroxisomal side.

The protein belongs to the fatty acyl-CoA reductase family. In terms of tissue distribution, specifically expressed in the meibomian glands of the eyelid and the sebaceous glands of the skin. Also expressed in the brain where large quantities of ether lipids are synthesized.

It localises to the peroxisome membrane. The catalysed reaction is a long-chain fatty acyl-CoA + 2 NADPH + 2 H(+) = a long-chain primary fatty alcohol + 2 NADP(+) + CoA. It catalyses the reaction hexadecanoyl-CoA + 2 NADPH + 2 H(+) = hexadecan-1-ol + 2 NADP(+) + CoA. The enzyme catalyses octadecanoyl-CoA + 2 NADPH + 2 H(+) = octadecan-1-ol + 2 NADP(+) + CoA. It carries out the reaction a very long-chain fatty acyl-CoA + 2 NADPH + 2 H(+) = a very long-chain primary fatty alcohol + 2 NADP(+) + CoA. The catalysed reaction is an ultra-long-chain fatty acyl-CoA + 2 NADPH + 2 H(+) = an ultra long-chain primary fatty alcohol + 2 NADP(+) + CoA. It catalyses the reaction eicosanoyl-CoA + 2 NADPH + 2 H(+) = eicosan-1-ol + 2 NADP(+) + CoA. The enzyme catalyses docosanoyl-CoA + 2 NADPH + 2 H(+) = docosan-1-ol + 2 NADP(+) + CoA. It carries out the reaction tetracosanoyl-CoA + 2 NADPH + 2 H(+) = tetracosan-1-ol + 2 NADP(+) + CoA. The catalysed reaction is hexacosanoyl-CoA + 2 NADPH + 2 H(+) = hexacosan-1-ol + 2 NADP(+) + CoA. It catalyses the reaction octacosanoyl-CoA + 2 NADPH + 2 H(+) = octacosan-1-ol + 2 NADP(+) + CoA. The enzyme catalyses triacontanoyl-CoA + 2 NADPH + 2 H(+) = triacontan-1-ol + 2 NADP(+) + CoA. It carries out the reaction 18-methylnonadecanoyl-CoA + 2 NADPH + 2 H(+) = 18-methylnonadecan-1-ol + 2 NADP(+) + CoA. The catalysed reaction is 20-methylheneicosanoyl-CoA + 2 NADPH + 2 H(+) = 20-methylheneicosan-1-ol + 2 NADP(+) + CoA. It catalyses the reaction 22-methyltricosanoyl-CoA + 2 NADPH + 2 H(+) = 22-methyltricosan-1-ol + 2 NADP(+) + CoA. The enzyme catalyses 24-methylpentacosanoyl-CoA + 2 NADPH + 2 H(+) = 24-methylpentacosan-1-ol + 2 NADP(+) + CoA. In terms of biological role, catalyzes the reduction of saturated but not unsaturated C16 or C18 fatty acyl-CoA to fatty alcohols. A lower activity can be observed with shorter fatty acyl-CoA substrates. Can produce very long-chain and ultra long-chain FAls, regardless of whether they have a straight or branched chain. It may play a role in the production of ether lipids/plasmalogens and wax monoesters which synthesis requires fatty alcohols as substrates. In Mus musculus (Mouse), this protein is Fatty acyl-CoA reductase 2.